The following is a 181-amino-acid chain: Mannose-specific lectin (181 aa).

The first 30 residues, 1–30 (MGRTTSSPKAMMRIATVAAILTILASTCMA), serve as a signal peptide directing secretion. A Bulb-type lectin domain is found at 31–140 (RNVLTNGEGL…DIWSTGTYRR (110 aa)). Residues glutamine 56, aspartate 58, asparagine 60, tyrosine 64, tryptophan 71, alanine 72, asparagine 74, glutamine 88, aspartate 90, asparagine 92, tyrosine 96, valine 103, tryptophan 104, asparagine 107, asparagine 114, glutamine 120, aspartate 122, asparagine 124, tyrosine 128, and tryptophan 133 each coordinate alpha-D-mannopyranose. A disulfide bridge connects residues cysteine 59 and cysteine 83.

As to quaternary structure, homodimer.

The protein localises to the secreted. Mannose-specific lectin. Shows agglutinating activity towards rabbit erythrocytes. However, it does not show agglutinating activity towards human erythrocytes. Has insecticidal activity against the cotton leafworm S.littoralis and the peach potato aphid M.persicae. Also displays antiviral activity and therefore may contribute to defense against infections. The chain is Mannose-specific lectin from Allium sativum (Garlic).